A 215-amino-acid polypeptide reads, in one-letter code: Large ribosomal subunit protein uL4 (215 aa).

The tract at residues 43–97 is disordered; that stretch reads RRQGTHSTKTRAEVSGGGKKPWRQKGTGRARAGSTRSPIWVGGGKTHTPKPRDYS.

Belongs to the universal ribosomal protein uL4 family. Part of the 50S ribosomal subunit.

In terms of biological role, one of the primary rRNA binding proteins, this protein initially binds near the 5'-end of the 23S rRNA. It is important during the early stages of 50S assembly. It makes multiple contacts with different domains of the 23S rRNA in the assembled 50S subunit and ribosome. Its function is as follows. Forms part of the polypeptide exit tunnel. This Brachyspira hyodysenteriae (strain ATCC 49526 / WA1) protein is Large ribosomal subunit protein uL4.